Consider the following 653-residue polypeptide: Acetyl-coenzyme A synthetase (653 aa).

CoA contacts are provided by residues 196-199 (RGGK) and T315. ATP is bound by residues 391–393 (GEP), 415–420 (DTWWQT), D506, and R521. S529 is a CoA binding site. R532 lines the ATP pocket. The Mg(2+) site is built by V543 and V548. K618 is subject to N6-acetyllysine.

Belongs to the ATP-dependent AMP-binding enzyme family. It depends on Mg(2+) as a cofactor. Acetylated. Deacetylation by the SIR2-homolog deacetylase activates the enzyme.

The enzyme catalyses acetate + ATP + CoA = acetyl-CoA + AMP + diphosphate. Catalyzes the conversion of acetate into acetyl-CoA (AcCoA), an essential intermediate at the junction of anabolic and catabolic pathways. AcsA undergoes a two-step reaction. In the first half reaction, AcsA combines acetate with ATP to form acetyl-adenylate (AcAMP) intermediate. In the second half reaction, it can then transfer the acetyl group from AcAMP to the sulfhydryl group of CoA, forming the product AcCoA. The protein is Acetyl-coenzyme A synthetase of Laribacter hongkongensis (strain HLHK9).